The following is a 204-amino-acid chain: Peptide deformylase (204 aa).

C131 and H174 together coordinate Fe cation. E175 is a catalytic residue. H178 contributes to the Fe cation binding site.

This sequence belongs to the polypeptide deformylase family. Requires Fe(2+) as cofactor.

The catalysed reaction is N-terminal N-formyl-L-methionyl-[peptide] + H2O = N-terminal L-methionyl-[peptide] + formate. Removes the formyl group from the N-terminal Met of newly synthesized proteins. Requires at least a dipeptide for an efficient rate of reaction. N-terminal L-methionine is a prerequisite for activity but the enzyme has broad specificity at other positions. This Streptococcus pyogenes serotype M49 (strain NZ131) protein is Peptide deformylase.